Consider the following 187-residue polypeptide: 2-oxoglutarate synthase subunit KorC (187 aa).

Heterotetramer of the KorA, KorB, KorC and KorD subunits.

It carries out the reaction 2 oxidized [2Fe-2S]-[ferredoxin] + 2-oxoglutarate + CoA = succinyl-CoA + 2 reduced [2Fe-2S]-[ferredoxin] + CO2 + H(+). The protein is 2-oxoglutarate synthase subunit KorC (korC) of Methanocaldococcus jannaschii (strain ATCC 43067 / DSM 2661 / JAL-1 / JCM 10045 / NBRC 100440) (Methanococcus jannaschii).